The following is a 307-amino-acid chain: UDP-3-O-acyl-N-acetylglucosamine deacetylase (307 aa).

Residues His80, His239, and Asp243 each coordinate Zn(2+). His266 (proton donor) is an active-site residue.

Belongs to the LpxC family. The cofactor is Zn(2+).

It catalyses the reaction a UDP-3-O-[(3R)-3-hydroxyacyl]-N-acetyl-alpha-D-glucosamine + H2O = a UDP-3-O-[(3R)-3-hydroxyacyl]-alpha-D-glucosamine + acetate. Its pathway is glycolipid biosynthesis; lipid IV(A) biosynthesis; lipid IV(A) from (3R)-3-hydroxytetradecanoyl-[acyl-carrier-protein] and UDP-N-acetyl-alpha-D-glucosamine: step 2/6. Its function is as follows. Catalyzes the hydrolysis of UDP-3-O-myristoyl-N-acetylglucosamine to form UDP-3-O-myristoylglucosamine and acetate, the committed step in lipid A biosynthesis. The protein is UDP-3-O-acyl-N-acetylglucosamine deacetylase of Neisseria meningitidis serogroup C (strain 053442).